The primary structure comprises 184 residues: Female-specific protein transformer (184 aa).

Composition is skewed to basic and acidic residues over residues 1-39 (MKMDADSSGTEHRDSRGSRSRSWREREHHGRTSERDSRK) and 49-58 (DEVREQDRIR). Disordered regions lie at residues 1 to 123 (MKMD…PKII) and 146 to 184 (YQRLPRPPPFPPAPFRYRQRQPFMGAPRFGYRNAGRPPY). Composition is skewed to basic residues over residues 59–75 (SLRQRAHQSTRRTRSRS) and 84–114 (SRHRRHRQRSRSRNRSRSRSSERRRRQRSPH). Residues 150–159 (PRPPPFPPAP) show a composition bias toward pro residues.

It is found in the nucleus speckle. Functionally, member of the regulatory pathway controlling female somatic sexual differentiation, regulated by Sxl. Activates dsx female-specific splicing by promoting the formation of a splicing enhancer complex which consists of tra, tra2 and sr proteins. The polypeptide is Female-specific protein transformer (tra) (Drosophila simulans (Fruit fly)).